Consider the following 328-residue polypeptide: Peroxidase 63 (328 aa).

An N-terminal signal peptide occupies residues 1-27; it reads MAEQSQLKNLTIILLLLCLSFQSLSFA. 4 cysteine pairs are disulfide-bonded: cysteine 41/cysteine 122, cysteine 74/cysteine 79, cysteine 128/cysteine 324, and cysteine 207/cysteine 234. The active-site Proton acceptor is histidine 72. Positions 73, 78, 80, and 82 each coordinate Ca(2+). Proline 170 contributes to the substrate binding site. Histidine 200 serves as a coordination point for heme b. A Ca(2+)-binding site is contributed by threonine 201. N-linked (GlcNAc...) asparagine glycosylation is found at asparagine 217 and asparagine 218. The Ca(2+) site is built by aspartate 248, threonine 251, and aspartate 256.

It belongs to the peroxidase family. Classical plant (class III) peroxidase subfamily. Heme b serves as cofactor. The cofactor is Ca(2+).

It is found in the secreted. The catalysed reaction is 2 a phenolic donor + H2O2 = 2 a phenolic radical donor + 2 H2O. Functionally, removal of H(2)O(2), oxidation of toxic reductants, biosynthesis and degradation of lignin, suberization, auxin catabolism, response to environmental stresses such as wounding, pathogen attack and oxidative stress. These functions might be dependent on each isozyme/isoform in each plant tissue. The polypeptide is Peroxidase 63 (PER63) (Arabidopsis thaliana (Mouse-ear cress)).